The following is a 307-amino-acid chain: Ribonuclease Z (307 aa).

Zn(2+)-binding residues include H63, H65, D67, H68, H143, D213, and H271. The Proton acceptor role is filled by D67.

This sequence belongs to the RNase Z family. In terms of assembly, homodimer. Zn(2+) is required as a cofactor.

It carries out the reaction Endonucleolytic cleavage of RNA, removing extra 3' nucleotides from tRNA precursor, generating 3' termini of tRNAs. A 3'-hydroxy group is left at the tRNA terminus and a 5'-phosphoryl group is left at the trailer molecule.. In terms of biological role, zinc phosphodiesterase, which displays some tRNA 3'-processing endonuclease activity. Probably involved in tRNA maturation, by removing a 3'-trailer from precursor tRNA. The sequence is that of Ribonuclease Z from Lactococcus lactis subsp. cremoris (strain MG1363).